We begin with the raw amino-acid sequence, 245 residues long: TPR repeat-containing protein PA4299 (245 aa).

The N-terminal stretch at 1–16 (MKALIGIGLCAALLGG) is a signal peptide. C17 carries the N-palmitoyl cysteine lipid modification. C17 carries S-diacylglycerol cysteine lipidation. 3 TPR repeats span residues 100–133 (PEAHHGLGLLALRNGDSARAVLELREAARLRPTE), 135–167 (RFRNDLGVALLKRGDRVGARFEFITALELQQGG), and 169–200 (LPATNLLGLLYLQGDREDAQRLIERLQLDARD). The tract at residues 210-245 (SWGAVPTPGAAPASDDPLAELPAEANMHTAMANEAP) is disordered.

The protein resides in the cell membrane. This Pseudomonas aeruginosa (strain ATCC 15692 / DSM 22644 / CIP 104116 / JCM 14847 / LMG 12228 / 1C / PRS 101 / PAO1) protein is TPR repeat-containing protein PA4299.